Consider the following 847-residue polypeptide: Leucine--tRNA ligase (847 aa).

A 'HIGH' region motif is present at residues 43–53 (PYPSGKLHMGH). A 'KMSKS' region motif is present at residues 607-611 (KMSKS). Lysine 610 contacts ATP.

The protein belongs to the class-I aminoacyl-tRNA synthetase family.

It is found in the cytoplasm. It carries out the reaction tRNA(Leu) + L-leucine + ATP = L-leucyl-tRNA(Leu) + AMP + diphosphate. The sequence is that of Leucine--tRNA ligase from Buchnera aphidicola subsp. Cinara cedri (strain Cc).